We begin with the raw amino-acid sequence, 880 residues long: Vacuole morphology and inheritance protein 14 (880 aa).

2 HEAT repeats span residues 82 to 119 (RYLR…IAKG) and 243 to 280 (SYLP…EVDR). The segment at 333-373 (SKPLSMETDDTKLSNTNETDDERHLTSQEQLLDSEATSQEP) is disordered. Polar residues predominate over residues 359 to 372 (SQEQLLDSEATSQE). HEAT repeat units lie at residues 388-425 (LNFP…ISPN), 429-466 (PFLS…LCSS), and 517-554 (KHND…DSND). Phosphoserine is present on residues serine 767, serine 805, and serine 867. The disordered stretch occupies residues 850–880 (EMESPNDNSSVILKDSGSLPFNRNVSDKLKK).

It belongs to the VAC14 family. As to quaternary structure, component of the PI(3,5)P2 regulatory complex, composed of ATG18, FIG4, FAB1, VAC14 and VAC7. VAC14 nucleates the assembly of the complex and serves as a scaffold.

Its subcellular location is the vacuole membrane. Its function is as follows. The PI(3,5)P2 regulatory complex regulates both the synthesis and turnover of phosphatidylinositol 3,5-bisphosphate (PtdIns(3,5)P2). Regulates the synthesis of PtdIns(3,5)P2 by positive activation of FAB1 and by controlling FIG4 localization. Required for FIG4-mediated turnover of PtdIns(3,5)P2 after hyperosmotic shock. Essential for the control of trafficking of some proteins to the vacuole lumen via the multivesicular body (MVB), and for maintenance of vacuole size and acidity. This is Vacuole morphology and inheritance protein 14 (VAC14) from Saccharomyces cerevisiae (strain ATCC 204508 / S288c) (Baker's yeast).